The chain runs to 169 residues: 4-hydroxylaminobenzoate lyase (169 aa).

The protein belongs to the PnbB family.

It catalyses the reaction 4-hydroxylaminobenzoate + H2O + H(+) = 3,4-dihydroxybenzoate + NH4(+). In terms of biological role, lyase involved in the degradation of nitroaromatic compounds. Catalyzes the conversion of 4-hydroxylaminobenzoate to 3,4-dihydroxybenzoate (protocatechuate). In Nocardioides sp. (strain LMS-CY), this protein is 4-hydroxylaminobenzoate lyase.